Here is a 72-residue protein sequence, read N- to C-terminus: Translation initiation factor IF-1 2 (72 aa).

One can recognise an S1-like domain in the interval 1 to 72 (MAKDDVIQMQ…SRARIVFRTK (72 aa)).

It belongs to the IF-1 family. Component of the 30S ribosomal translation pre-initiation complex which assembles on the 30S ribosome in the order IF-2 and IF-3, IF-1 and N-formylmethionyl-tRNA(fMet); mRNA recruitment can occur at any time during PIC assembly.

It localises to the cytoplasm. Functionally, one of the essential components for the initiation of protein synthesis. Stabilizes the binding of IF-2 and IF-3 on the 30S subunit to which N-formylmethionyl-tRNA(fMet) subsequently binds. Helps modulate mRNA selection, yielding the 30S pre-initiation complex (PIC). Upon addition of the 50S ribosomal subunit IF-1, IF-2 and IF-3 are released leaving the mature 70S translation initiation complex. The chain is Translation initiation factor IF-1 2 from Cupriavidus metallidurans (strain ATCC 43123 / DSM 2839 / NBRC 102507 / CH34) (Ralstonia metallidurans).